Here is a 249-residue protein sequence, read N- to C-terminus: Indole-3-glycerol phosphate synthase (249 aa).

Belongs to the TrpC family.

It carries out the reaction 1-(2-carboxyphenylamino)-1-deoxy-D-ribulose 5-phosphate + H(+) = (1S,2R)-1-C-(indol-3-yl)glycerol 3-phosphate + CO2 + H2O. The protein operates within amino-acid biosynthesis; L-tryptophan biosynthesis; L-tryptophan from chorismate: step 4/5. The chain is Indole-3-glycerol phosphate synthase from Pyrobaculum arsenaticum (strain DSM 13514 / JCM 11321 / PZ6).